A 348-amino-acid polypeptide reads, in one-letter code: D-alanine--D-alanine ligase (348 aa).

Residues 132–334 enclose the ATP-grasp domain; the sequence is KRVLESADIP…YAELIEELVR (203 aa). 162-217 contributes to the ATP binding site; that stretch reads EAVLSYPVFVKPANMGSSVGISKAESEEELRAAILLALTYDSRILIEQGVLAREIE. 3 residues coordinate Mg(2+): D288, E301, and N303.

Belongs to the D-alanine--D-alanine ligase family. Mg(2+) is required as a cofactor. Requires Mn(2+) as cofactor.

The protein localises to the cytoplasm. The catalysed reaction is 2 D-alanine + ATP = D-alanyl-D-alanine + ADP + phosphate + H(+). It participates in cell wall biogenesis; peptidoglycan biosynthesis. In terms of biological role, cell wall formation. The chain is D-alanine--D-alanine ligase from Streptococcus equi subsp. zooepidemicus (strain MGCS10565).